Consider the following 336-residue polypeptide: Glyceraldehyde-3-phosphate dehydrogenase 1 (336 aa).

Residues 13 to 14 and Asp35 each bind NAD(+); that span reads RI. The residue at position 59 (Ser59) is a Phosphoserine. NAD(+) is bound at residue Arg80. At Ser125 the chain carries Phosphoserine. D-glyceraldehyde 3-phosphate is bound by residues 151-153, Thr182, 211-212, and Arg234; these read SCT and TG. Cys152 functions as the Nucleophile in the catalytic mechanism. Position 316 (Asn316) interacts with NAD(+).

Belongs to the glyceraldehyde-3-phosphate dehydrogenase family. Homotetramer.

It localises to the cytoplasm. The catalysed reaction is D-glyceraldehyde 3-phosphate + phosphate + NAD(+) = (2R)-3-phospho-glyceroyl phosphate + NADH + H(+). Its pathway is carbohydrate degradation; glycolysis; pyruvate from D-glyceraldehyde 3-phosphate: step 1/5. The polypeptide is Glyceraldehyde-3-phosphate dehydrogenase 1 (tdh1) (Schizosaccharomyces pombe (strain 972 / ATCC 24843) (Fission yeast)).